The following is a 199-amino-acid chain: MSAETAPINLTHHFLIAMPGLEDEAFSRSVIYLCEHSERGALGLIINKPSQLTLEGLLEKVDLALGREDLRGNRVFNGGPVQTDRGFVLHDPMVIEGAPDDESAYASTMTIPGGLEMTTSKDVLEALSDGAGPKRLLVTLGYASWGEGQLESELAENAWLTVGADANVIFDTPVDDRYDRALGLLGLQRWMISPEAGRA.

It belongs to the UPF0301 (AlgH) family.

This Delftia acidovorans (strain DSM 14801 / SPH-1) protein is UPF0301 protein Daci_1578.